The chain runs to 246 residues: 1-(5-phosphoribosyl)-5-[(5-phosphoribosylamino)methylideneamino] imidazole-4-carboxamide isomerase (246 aa).

The active-site Proton acceptor is the Asp-8. Asp-130 (proton donor) is an active-site residue.

This sequence belongs to the HisA/HisF family.

It is found in the cytoplasm. It catalyses the reaction 1-(5-phospho-beta-D-ribosyl)-5-[(5-phospho-beta-D-ribosylamino)methylideneamino]imidazole-4-carboxamide = 5-[(5-phospho-1-deoxy-D-ribulos-1-ylimino)methylamino]-1-(5-phospho-beta-D-ribosyl)imidazole-4-carboxamide. It functions in the pathway amino-acid biosynthesis; L-histidine biosynthesis; L-histidine from 5-phospho-alpha-D-ribose 1-diphosphate: step 4/9. The protein is 1-(5-phosphoribosyl)-5-[(5-phosphoribosylamino)methylideneamino] imidazole-4-carboxamide isomerase of Halorhodospira halophila (strain DSM 244 / SL1) (Ectothiorhodospira halophila (strain DSM 244 / SL1)).